The primary structure comprises 550 residues: Dihydroxy-acid dehydratase (550 aa).

Asp-78 is a Mg(2+) binding site. Cys-119 contacts [2Fe-2S] cluster. Asp-120 and Lys-121 together coordinate Mg(2+). Lys-121 is modified (N6-carboxylysine). [2Fe-2S] cluster is bound at residue Cys-192. Residue Glu-440 participates in Mg(2+) binding. Residue Ser-466 is the Proton acceptor of the active site.

It belongs to the IlvD/Edd family. Homodimer. It depends on [2Fe-2S] cluster as a cofactor. Requires Mg(2+) as cofactor.

It catalyses the reaction (2R)-2,3-dihydroxy-3-methylbutanoate = 3-methyl-2-oxobutanoate + H2O. It carries out the reaction (2R,3R)-2,3-dihydroxy-3-methylpentanoate = (S)-3-methyl-2-oxopentanoate + H2O. It functions in the pathway amino-acid biosynthesis; L-isoleucine biosynthesis; L-isoleucine from 2-oxobutanoate: step 3/4. The protein operates within amino-acid biosynthesis; L-valine biosynthesis; L-valine from pyruvate: step 3/4. Functions in the biosynthesis of branched-chain amino acids. Catalyzes the dehydration of (2R,3R)-2,3-dihydroxy-3-methylpentanoate (2,3-dihydroxy-3-methylvalerate) into 2-oxo-3-methylpentanoate (2-oxo-3-methylvalerate) and of (2R)-2,3-dihydroxy-3-methylbutanoate (2,3-dihydroxyisovalerate) into 2-oxo-3-methylbutanoate (2-oxoisovalerate), the penultimate precursor to L-isoleucine and L-valine, respectively. The sequence is that of Dihydroxy-acid dehydratase from Thermodesulfovibrio yellowstonii (strain ATCC 51303 / DSM 11347 / YP87).